A 330-amino-acid chain; its full sequence is Membrane progestin receptor gamma (330 aa).

Residues 1–51 (MLSLKLPRLFSIDQIPQVFHEQGILFGYRHPQSSATACILSLFQMTNETLN) are Cytoplasmic-facing. The chain crosses the membrane as a helical span at residues 52 to 72 (IWTHLLPFWFFAWRFVTALYM). Residues 73–80 (TDIKNDSY) lie on the Extracellular side of the membrane. The helical transmembrane segment at 81-101 (SWPMLVYMCTSCVYPLVSSCA) threads the bilayer. The Cytoplasmic portion of the chain corresponds to 102–113 (HTFSSMSKNARH). A helical membrane pass occupies residues 114–134 (ICYFLDYGAVNLFSLGSAIAY). Topologically, residues 135–141 (SAYTFPD) are extracellular. The chain crosses the membrane as a helical span at residues 142 to 162 (ALMCTTFHDYYVALAVLNTIL). Topologically, residues 163–186 (STGLSCYSRFLEIQKPRLCKVIRV) are cytoplasmic. The chain crosses the membrane as a helical span at residues 187 to 207 (LAFAYPYTWDSLPIFYRLFLF). Residues 208–253 (PGESAQNEATSYHQKHMIMTLLASFLYSAHLPERLAPGRFDYIGHS) lie on the Extracellular side of the membrane. A helical membrane pass occupies residues 254–274 (HQLFHVCVILATHMQMEAILL). Residues 275–294 (DKTLRKEWLLATSKPFSFSQ) are Cytoplasmic-facing. The helical transmembrane segment at 295-315 (IAGAILLCIIFSLSNIIYFSA) threads the bilayer. Residues 316–330 (ALYRIPKPELHKKET) lie on the Extracellular side of the membrane.

This sequence belongs to the ADIPOR family. Expressed in the brain, lung, kidney, colon, adrenal and lung.

The protein localises to the cell membrane. Plasma membrane progesterone (P4) receptor coupled to G proteins. Seems to act through a G(i) mediated pathway. May be involved in oocyte maturation. The sequence is that of Membrane progestin receptor gamma from Homo sapiens (Human).